Here is a 346-residue protein sequence, read N- to C-terminus: Uroporphyrinogen decarboxylase (346 aa).

Residues 23–27, aspartate 72, tyrosine 155, serine 209, and histidine 322 each bind substrate; that span reads RQAGR.

The protein belongs to the uroporphyrinogen decarboxylase family. In terms of assembly, homodimer.

The protein localises to the cytoplasm. The catalysed reaction is uroporphyrinogen III + 4 H(+) = coproporphyrinogen III + 4 CO2. The protein operates within porphyrin-containing compound metabolism; protoporphyrin-IX biosynthesis; coproporphyrinogen-III from 5-aminolevulinate: step 4/4. Its function is as follows. Catalyzes the decarboxylation of four acetate groups of uroporphyrinogen-III to yield coproporphyrinogen-III. In Anaeromyxobacter dehalogenans (strain 2CP-C), this protein is Uroporphyrinogen decarboxylase.